Consider the following 338-residue polypeptide: Phenylalanine--tRNA ligase alpha subunit (338 aa).

Residue Glu259 participates in Mg(2+) binding.

The protein belongs to the class-II aminoacyl-tRNA synthetase family. Phe-tRNA synthetase alpha subunit type 1 subfamily. As to quaternary structure, tetramer of two alpha and two beta subunits. Requires Mg(2+) as cofactor.

It localises to the cytoplasm. It carries out the reaction tRNA(Phe) + L-phenylalanine + ATP = L-phenylalanyl-tRNA(Phe) + AMP + diphosphate + H(+). The chain is Phenylalanine--tRNA ligase alpha subunit from Herminiimonas arsenicoxydans.